The chain runs to 126 residues: Large ribosomal subunit protein bL20c (126 aa).

Belongs to the bacterial ribosomal protein bL20 family.

The protein resides in the plastid. It localises to the chloroplast. Its function is as follows. Binds directly to 23S ribosomal RNA and is necessary for the in vitro assembly process of the 50S ribosomal subunit. It is not involved in the protein synthesizing functions of that subunit. The sequence is that of Large ribosomal subunit protein bL20c from Pelargonium hortorum (Common geranium).